We begin with the raw amino-acid sequence, 710 residues long: Lactoperoxidase (710 aa).

The N-terminal stretch at Met-1–Ser-22 is a signal peptide. Positions Thr-23–Arg-98 are excised as a propeptide. Asn-25, Asn-104, and Asn-131 each carry an N-linked (GlcNAc...) asparagine glycan. Cys-130 and Cys-143 are oxidised to a cystine. Asp-223 is a binding site for heme b. His-224 serves as the catalytic Proton acceptor. Asp-225 serves as a coordination point for Ca(2+). N-linked (GlcNAc...) asparagine glycosylation is present at Asn-238. Intrachain disulfides connect Cys-244-Cys-254 and Cys-248-Cys-272. Residues Thr-299, Phe-301, Asp-303, and Ser-305 each contribute to the Ca(2+) site. Position 313 is a phosphoserine (Ser-313). A glycan (N-linked (GlcNAc...) asparagine) is linked at Asn-320. The cysteines at positions 352 and 363 are disulfide-linked. Residues Glu-373 and His-466 each contribute to the heme b site. Position 480 is a 3'-nitrotyrosine (Tyr-480). 2 disulfide bridges follow: Cys-571-Cys-628 and Cys-669-Cys-694.

This sequence belongs to the peroxidase family. XPO subfamily. Ca(2+) serves as cofactor. Heme b is required as a cofactor. As to expression, expressed in the lacrimal gland with higher levels and 3-fold higher activity in adult females than males and secreted into tears (at protein level).

Its subcellular location is the secreted. It localises to the cytoplasm. It catalyses the reaction 2 a phenolic donor + H2O2 = 2 a phenolic radical donor + 2 H2O. The enzyme catalyses thiocyanate + H2O2 + H(+) = hypothiocyanous acid + H2O. It carries out the reaction iodide + H2O2 = hypoiodite + H2O. Its function is as follows. Heme-containing oxidoreductase which catalyzes the conversion of thiocyanate (SCN(-)) into antimicrobial agent hypothiocyanous acid (OSCN(-)) in the presence of hydrogen peroxide (H2O2). Also involved in the conversion of iodide (I(-)) into hypoiodite (IO(-)) in the presence of H2O2. Responsible for the inactivation of a wide range of micro-organisms and hence, important component of defense mechanism. May be implicated in airway host defense against infection. May contribute to maintaining an appropriate H2O2 cellular level, therefore protecting cells from H2O2-caused injuries and inflammation. The protein is Lactoperoxidase (LPO) of Mesocricetus auratus (Golden hamster).